A 204-amino-acid chain; its full sequence is Somatotropin (204 aa).

The signal sequence occupies residues 1-17 (MNSVVLQLSVVCLGVSS). Pyrrolidone carboxylic acid is present on Q18. H36 provides a ligand contact to Zn(2+). Residues C69 and C177 are joined by a disulfide bond. Zn(2+) is bound at residue E186. C194 and C202 are oxidised to a cystine.

Belongs to the somatotropin/prolactin family.

It is found in the secreted. In terms of biological role, growth hormone plays an important role in growth control and involved in the regulation of several anabolic processes. The polypeptide is Somatotropin (gh) (Oreochromis mossambicus (Mozambique tilapia)).